The chain runs to 213 residues: Octanoyltransferase (213 aa).

Residues Asn-32–Asp-207 enclose the BPL/LPL catalytic domain. Substrate is bound by residues Arg-71–His-78, Ser-138–Gly-140, and Gly-151–Ala-153. The active-site Acyl-thioester intermediate is the Cys-169.

It belongs to the LipB family.

The protein localises to the cytoplasm. It catalyses the reaction octanoyl-[ACP] + L-lysyl-[protein] = N(6)-octanoyl-L-lysyl-[protein] + holo-[ACP] + H(+). It functions in the pathway protein modification; protein lipoylation via endogenous pathway; protein N(6)-(lipoyl)lysine from octanoyl-[acyl-carrier-protein]: step 1/2. In terms of biological role, catalyzes the transfer of endogenously produced octanoic acid from octanoyl-acyl-carrier-protein onto the lipoyl domains of lipoate-dependent enzymes. Lipoyl-ACP can also act as a substrate although octanoyl-ACP is likely to be the physiological substrate. The sequence is that of Octanoyltransferase from Shigella flexneri serotype 5b (strain 8401).